Reading from the N-terminus, the 765-residue chain is MKWSILLLVGCAAAIDVPRQPYAPTGSGKKRLTFNETVVKRAISPSAISVEWISTSEDGDYVYQDQDGSLKIQSIVTNHTQTLVPADKVPEDAYSYWIHPNLSSVLWATNYTKQYRYSYFADYFIQDVQSMKLRPLAPDQSGDIQYAQWSPTGDAIAFVRDNNVFVWTNASTSQITNDGGPDLFNGVPDWIYEEEILGDRFALWFSPDGAYLAFLRFNETGVPTFTVPYYMDNEEIAPPYPRELELRYPKVSQTNPTVELNLLELRTGERTPVPIDAFDAKELIIGEVAWLTGKHDVVAVKAFNRVQDRQKVVAVDVASLRSKTISERDGTDGWLDNLLSMAYIGPIGESKEEYYIDISDQSGWAHLWLFPVAGGEPIALTKGEWEVTNILSIDKPRQLVYFLSTKHHSTERHLYSVSWKTKEITPLVDDTVPAVWSASFSSQGGYYILSYRGPDVPYQDLYAINSTAPLRTITSNAAVLNALKEYTLPNITYFELALPSGETLNVMQRLPVKFSPKKKYPVLFTPYGGPGAQEVSKAWQALDFKAYIASDPELEYITWTVDNRGTGYKGRAFRCQVASRLGELEAADQVFAAQQAAKLPYVDAQHIAIWGWSYGGYLTGKVIETDSGAFSLGVQTAPVSDWRFYDSMYTERYMKTLESNAAGYNASAIRKVAGYKNVRGGVLIQHGTGDDNVHFQNAAALVDTLVGAGVTPEKLQVQWFTDSDHGIRYHGGNVFLYRQLSKRLYEEKKRKEKGEAHQWSKKSVL.

Residues 1 to 14 form the signal peptide; it reads MKWSILLLVGCAAA. Asparagine 35, asparagine 78, asparagine 101, asparagine 110, asparagine 169, asparagine 218, asparagine 465, and asparagine 490 each carry an N-linked (GlcNAc...) asparagine glycan. Serine 613 acts as the Charge relay system in catalysis. Asparagine 665 carries an N-linked (GlcNAc...) asparagine glycan. Residues aspartate 690 and histidine 725 each act as charge relay system in the active site.

The protein belongs to the peptidase S9B family.

It localises to the secreted. It catalyses the reaction Release of an N-terminal dipeptide, Xaa-Yaa-|-Zaa-, from a polypeptide, preferentially when Yaa is Pro, provided Zaa is neither Pro nor hydroxyproline.. Extracellular dipeptidyl-peptidase which removes N-terminal dipeptides sequentially from polypeptides having unsubstituted N-termini provided that the penultimate residue is proline. Contributes to pathogenicity. The protein is Probable dipeptidyl peptidase 4 (dpp4) of Aspergillus fumigatus (strain CBS 144.89 / FGSC A1163 / CEA10) (Neosartorya fumigata).